We begin with the raw amino-acid sequence, 328 residues long: Malate dehydrogenase 1 (328 aa).

An NAD(+)-binding site is contributed by 12-18; the sequence is GAAGQIG. 2 residues coordinate substrate: arginine 95 and arginine 101. NAD(+) contacts are provided by residues asparagine 108, glutamine 115, and 132-134; that span reads VGN. The substrate site is built by asparagine 134 and arginine 165. Histidine 190 (proton acceptor) is an active-site residue.

It belongs to the LDH/MDH superfamily. MDH type 2 family.

The catalysed reaction is (S)-malate + NAD(+) = oxaloacetate + NADH + H(+). Its function is as follows. Catalyzes the reversible oxidation of malate to oxaloacetate. This is Malate dehydrogenase 1 from Albidiferax ferrireducens (strain ATCC BAA-621 / DSM 15236 / T118) (Rhodoferax ferrireducens).